The primary structure comprises 2410 residues: Cell wall alpha-1,3-glucan synthase ags1 (2410 aa).

S1643, S1644, and S1651 each carry phosphoserine. T1653 bears the Phosphothreonine mark. The interval 1685–1706 is disordered; it reads SLSLGSRRGPGHTTEDDASDGL. Phosphoserine occurs at positions 1738 and 1812. Positions 1796-1827 are disordered; that stretch reads QDDLSDPARSVDSDSVSPPLPPFVAGSNPNAR. Residues 1802–1827 are compositionally biased toward low complexity; that stretch reads PARSVDSDSVSPPLPPFVAGSNPNAR.

This sequence belongs to the glycosyltransferase group 1 family. In terms of assembly, interacts with sad1.

It catalyses the reaction [(1-&gt;3)-alpha-D-glucosyl](n) + UDP-alpha-D-glucose = [(1-&gt;3)-alpha-D-glucosyl](n+1) + UDP + H(+). Its function is as follows. Required for alpha-1,3-glucan and alpha-1,4-glucan production which are required for cell wall synthesis. In Schizosaccharomyces pombe (strain 972 / ATCC 24843) (Fission yeast), this protein is Cell wall alpha-1,3-glucan synthase ags1 (ags1).